The sequence spans 137 residues: Basic phospholipase A2 3 (137 aa).

Positions 1–11 (LVAVCVSLLGA) are cleaved as a signal peptide. The propeptide occupies 12-19 (ANIPPQPL). Intrachain disulfides connect Cys-30/Cys-89, Cys-44/Cys-136, Cys-46/Cys-62, Cys-61/Cys-117, Cys-68/Cys-110, Cys-78/Cys-103, and Cys-96/Cys-108. Tyr-45, Gly-47, and Gly-49 together coordinate Ca(2+). His-65 is an active-site residue. Asp-66 contacts Ca(2+). The active site involves Asp-111.

The protein belongs to the phospholipase A2 family. Group I subfamily. D49 sub-subfamily. As to quaternary structure, monomer, or homotrimer. Was firstly described as a trimer, but has been reinterpreted with the possibility of being a monomer. Ca(2+) is required as a cofactor. Expressed by the venom gland.

Its subcellular location is the secreted. It carries out the reaction a 1,2-diacyl-sn-glycero-3-phosphocholine + H2O = a 1-acyl-sn-glycero-3-phosphocholine + a fatty acid + H(+). Its function is as follows. Snake venom phospholipase A2 (PLA2) that shows anticoagulant and neurotoxic activities. PLA2 catalyzes the calcium-dependent hydrolysis of the 2-acyl groups in 3-sn-phosphoglycerides. The protein is Basic phospholipase A2 3 of Bungarus caeruleus (Indian krait).